Consider the following 590-residue polypeptide: UvrABC system protein C (590 aa).

Residues 14 to 91 (DQPGCYLMKD…IKKYDPKYNV (78 aa)) enclose the GIY-YIG domain. The 36-residue stretch at 196-231 (NEIKKELEAKMAEAAEKLEFERAKEFRDQLAHIEST) folds into the UVR domain.

The protein belongs to the UvrC family. Interacts with UvrB in an incision complex.

It localises to the cytoplasm. Its function is as follows. The UvrABC repair system catalyzes the recognition and processing of DNA lesions. UvrC both incises the 5' and 3' sides of the lesion. The N-terminal half is responsible for the 3' incision and the C-terminal half is responsible for the 5' incision. In Bacillus velezensis (strain DSM 23117 / BGSC 10A6 / LMG 26770 / FZB42) (Bacillus amyloliquefaciens subsp. plantarum), this protein is UvrABC system protein C.